The chain runs to 1103 residues: MDFKRRQGPGPGVPPKRARGGLWDEDEPSQFEENLALLEEIEAENRLQEAEEELQLPPQGPAGGQFSTADIDPRWKRPALCALDPNTEPLIFQQLEIDHYVGSAVPLPGGPPTSCNSVPILRAFGVTDEGFSVCCHIHGFAPYFYTPAPPGFGAEHLSDLQRELSTAISRDQRGGKELSGPAVLAIELCSRESMFGYHGHGPSPFLRITLALPRLVAPARRLLEQGIRVPGLGTPSFAPYEANVDFEIRFMVDADIVGCNWLELPAGKYVWRTEKKATQCQLEVDVLWSDVISHPPEGQWQRIAPLRVLSFDIECAGRKGIFPEPERDPVIQICSLGLRWGEPEPFLRLALTLRPCAPILGAKVQSYEREEDLLQAWPNFILAMDPDVITGYNIQNFDLPYLISRAQTLKVDRFPFLGRVTGLRSNIRDSSFQSRQVGRRDSKVVSMVGRVQMDMLQVLLREHKLRSYTLNAVSFHFLGEQKEDVQHSIITDLQNGNEQTRRRLAVYCLRDAFLPLRLLERLMVLVNNVEMARVTGVPLGYLLSRGQQVKVVSQLLRQAMRQGLLMPVVKTEGGEDYTGATVIEPLKGYYDVPIATLDFSSLYPSIMMAHNLCYTTLLRPGAAQKLGLKPDEFIKTPTGDEFVKSSVRKGLLPQILENLLSARKRAKAELAQETDPLRRQVLDGRQLALKVSANSVYGFTGAEVGKLPCLEISQSVTGFGRQMIEKTKQLVESKYTLENGYNANAKVVYGDTDSVMCRFGVSSVAEAMSLGREAANWVSSHFPSPIRLEFEKVYFPYLLISKKRYAGLLFSSQPDTHDRMDCKGLEAVRRDNCPLVANLVTSSLRRILVDRDPDGAVAHAKDVISDLLCNRIDISQLVITKELTRAAADYAGKQAHVELAERMRKRDPGSAPSLGDRVPYVIIGAAKGVAAYMKSEDPLFVLEHSLPIDTQYYLGQQLAKPLLRIFEPILGEGRAESVLLRGDHTRCKTVLTSKVGGLLAFTKRRNCCIGCRSVINHQGAVCEFCQPRESELYQKEVSHLNALEERFSRLWTQCQRCQGSLHEDVICTSRDCPIFYMRKKVRKDLEDQERLLQRFGPPGPEAW.

Residues 1-29 (MDFKRRQGPGPGVPPKRARGGLWDEDEPS) are disordered. The Nuclear localization signal signature appears at 4–19 (KRRQGPGPGVPPKRAR). An Omega-N-methylarginine modification is found at R19. A Glycyl lysine isopeptide (Lys-Gly) (interchain with G-Cter in SUMO2) cross-link involves residue K570. 4 residues coordinate Zn(2+): C1008, C1011, C1022, and C1025. The CysA-type zinc-finger motif lies at 1008–1025 (CIGCRSVINHQGAVCEFC). C1054, C1057, C1067, and C1072 together coordinate [4Fe-4S] cluster. A CysB motif motif is present at residues 1054 to 1072 (CQRCQGSLHEDVICTSRDC).

The protein belongs to the DNA polymerase type-B family. In terms of assembly, component of the tetrameric DNA polymerase delta complex (Pol-delta4), which consists of POLD1/p125, POLD2/p50, POLD3/p66/p68 and POLD4/p12, with POLD1 bearing both DNA polymerase and 3' to 5' proofreading exonuclease activities. Within Pol-delta4, directly interacts with POLD2 and POLD4. Following genotoxic stress by DNA-damaging agents, such as ultraviolet light and methyl methanesulfonate, or by replication stress induced by treatment with hydroxyurea or aphidicolin, Pol-delta4 is converted into a trimeric form of the complex (Pol-delta3) by POLD4 degradation. Pol-delta3 is the major form at S phase replication sites and DNA damage sites. POLD1 displays different catalytic properties depending upon the complex it is found in. It exhibits higher proofreading activity and fidelity than Pol-delta4, making it particularly well suited to respond to DNA damage. Directly interacts with PCNA, as do POLD3 and POLD4; this interaction stimulates Pol-delta4 polymerase activity. As POLD2 and POLD4, directly interacts with WRNIP1; this interaction stimulates DNA polymerase delta-mediated DNA synthesis, independently of the presence of PCNA. This stimulation may be due predominantly to an increase of initiation frequency and also to increased processivity. Also observed as a dimeric complex with POLD2 (Pol-delta2). Pol-delta2 is relatively insensitive to the PCNA stimulation (2-5-fold) compared to Pol-delta4 that is stimulated by over 50-fold. The DNA polymerase delta complex interacts with POLDIP2; this interaction is probably mediated through direct binding to POLD2. Interacts with CIAO1. Interacts with POLDIP2. Interacts with RFC1. Requires [4Fe-4S] cluster as cofactor.

It is found in the nucleus. It carries out the reaction DNA(n) + a 2'-deoxyribonucleoside 5'-triphosphate = DNA(n+1) + diphosphate. Its activity is regulated as follows. Regulated by alteration of quaternary structure. Exhibits burst rates of DNA synthesis are about 5 times faster in the presence of POLD4 (Pol-delta4 complex) than in its absence (Pol-delta3 complex), while the affinity of the enzyme for its DNA and dNTP substrates appears unchanged. The Pol-delta3 complex is more likely to proofread DNA synthesis because it cleaves single-stranded DNA twice as fast and transfers mismatched DNA from the polymerase to the exonuclease sites 9 times faster compared to the Pol-delta3 complex. Pol-delta3 also extends mismatched primers 3 times more slowly in the absence of POLD4. The conversion of Pol-delta4 into Pol-delta3 is induced by genotoxic stress or by replication stress leading POLD4 degradation. Stimulated in the presence of PCNA. This stimulation is further increased in the presence of KCTD13/PDIP1, most probably via direct interaction between KCTD13 and POLD2. Its function is as follows. As the catalytic component of the trimeric (Pol-delta3 complex) and tetrameric DNA polymerase delta complexes (Pol-delta4 complex), plays a crucial role in high fidelity genome replication, including in lagging strand synthesis, and repair. Exhibits both DNA polymerase and 3'- to 5'-exonuclease activities. Requires the presence of accessory proteins POLD2, POLD3 and POLD4 for full activity. Depending upon the absence (Pol-delta3) or the presence of POLD4 (Pol-delta4), displays differences in catalytic activity. Most notably, expresses higher proofreading activity in the context of Pol-delta3 compared with that of Pol-delta4. Although both Pol-delta3 and Pol-delta4 process Okazaki fragments in vitro, Pol-delta3 may be better suited to fulfill this task, exhibiting near-absence of strand displacement activity compared to Pol-delta4 and stalling on encounter with the 5'-blocking oligonucleotides. Pol-delta3 idling process may avoid the formation of a gap, while maintaining a nick that can be readily ligated. Along with DNA polymerase kappa, DNA polymerase delta carries out approximately half of nucleotide excision repair (NER) synthesis following UV irradiation. Under conditions of DNA replication stress, in the presence of POLD3 and POLD4, may catalyze the repair of broken replication forks through break-induced replication (BIR). Involved in the translesion synthesis (TLS) of templates carrying O6-methylguanine, 8oxoG or abasic sites. The polypeptide is DNA polymerase delta catalytic subunit (POLD1) (Mesocricetus auratus (Golden hamster)).